Reading from the N-terminus, the 523-residue chain is uncharacterized protein (523 aa).

A compositionally biased stretch (polar residues) spans Met-1–His-14. 3 disordered regions span residues Met-1–Ala-36, His-51–Ser-187, and Gln-200–Lys-224. The span at Asp-87–Ile-97 shows a compositional bias: basic and acidic residues. Composition is skewed to acidic residues over residues Asp-117–Tyr-130 and Gln-138–Asn-182. Residues Gln-200–Pro-210 are compositionally biased toward basic and acidic residues.

It belongs to the AATF family.

This is an uncharacterized protein from Dictyostelium discoideum (Social amoeba).